The primary structure comprises 118 residues: Ribonuclease P protein component (118 aa).

This sequence belongs to the RnpA family. In terms of assembly, consists of a catalytic RNA component (M1 or rnpB) and a protein subunit.

The enzyme catalyses Endonucleolytic cleavage of RNA, removing 5'-extranucleotides from tRNA precursor.. Its function is as follows. RNaseP catalyzes the removal of the 5'-leader sequence from pre-tRNA to produce the mature 5'-terminus. It can also cleave other RNA substrates such as 4.5S RNA. The protein component plays an auxiliary but essential role in vivo by binding to the 5'-leader sequence and broadening the substrate specificity of the ribozyme. The protein is Ribonuclease P protein component of Vibrio campbellii (strain ATCC BAA-1116).